Reading from the N-terminus, the 354-residue chain is Trans-3-hydroxy-L-proline dehydratase (354 aa).

Cys104 serves as the catalytic Proton acceptor. Substrate is bound by residues Gly105 to His106, Asp269, and Gly274 to Ser275.

It belongs to the proline racemase family. Homodimer. Ubiquitously expressed.

The enzyme catalyses trans-3-hydroxy-L-proline = 1-pyrroline-2-carboxylate + H2O. Functionally, catalyzes the dehydration of trans-3-hydroxy-L-proline to Delta(1)-pyrroline-2-carboxylate (Pyr2C). May be required to degrade trans-3-hydroxy-L-proline from the diet and originating from the degradation of proteins such as collagen-IV that contain it. The sequence is that of Trans-3-hydroxy-L-proline dehydratase (L3HYPDH) from Homo sapiens (Human).